Here is a 458-residue protein sequence, read N- to C-terminus: Ammonium transporter Rh type B (458 aa).

At 1 to 13 the chain is on the cytoplasmic side; sequence MAGSPSRAAGRRL. Residues 14–34 traverse the membrane as a helical segment; that stretch reads QLPLLCLFLQGATAVLFAVFV. The Extracellular segment spans residues 35 to 61; sequence RYNHKTDAALWHRSNHSNADNEFYFRY. N49 carries N-linked (GlcNAc...) asparagine glycosylation. A helical membrane pass occupies residues 62-82; it reads PSFQDVHAMVFVGFGFLMVFL. Residues 83-86 are Cytoplasmic-facing; sequence QRYG. A helical membrane pass occupies residues 87 to 107; the sequence is FSSVGFTFLLAAFALQWSTLV. Over 108 to 124 the chain is Extracellular; the sequence is QGFLHSFHGGHIHVGVE. The chain crosses the membrane as a helical span at residues 125–145; sequence SMINADFCAGAVLISFGAVLG. At 146–149 the chain is on the cytoplasmic side; the sequence is KTGP. A helical transmembrane segment spans residues 150–170; sequence AQLLLMALLEVVLFGINEFVL. At 171–178 the chain is on the extracellular side; it reads LHLLGVRD. The helical transmembrane segment at 179–201 threads the bilayer; sequence AGGSMTIHTFGAYFGLVLSRVLY. Over 202–219 the chain is Cytoplasmic; sequence RPQLEKSKHRQGSVYHSD. The chain crosses the membrane as a helical span at residues 220–240; that stretch reads LFTMIGTIFLWIFWPSFNAAL. Over 241–251 the chain is Extracellular; the sequence is TALGAGQHRTA. A helical membrane pass occupies residues 252 to 272; the sequence is LNTYYSLAASTLGTFALSALV. The Cytoplasmic portion of the chain corresponds to 273-282; that stretch reads GEDGRLDMVH. A helical transmembrane segment spans residues 283-303; that stretch reads IQNAALTGGVVVGTSSKMMLT. Residue P304 is a topological domain, extracellular. A helical membrane pass occupies residues 305 to 325; it reads FGALAAGFLAGTVSTLGYKFF. Residues 326 to 346 are Cytoplasmic-facing; sequence TPILESKFKVQDTCGVHNLHG. Residues 347–367 traverse the membrane as a helical segment; it reads MPGVLGALLGVLVAGLATHEA. At 368-393 the chain is on the extracellular side; sequence YGDGLESVFPLIAEGQRSATSQAMHQ. A helical transmembrane segment spans residues 394 to 414; sequence LFGLFVTLMFASVGGGLGGLL. Over 415-458 the chain is Cytoplasmic; sequence LKLPFLDSPPDSQCYEDQVHWQVPGEHEDKAQRPLRVEEADTYA. The interval 416 to 424 is interaction with ANK3; sequence KLPFLDSPP. The short motif at 429 to 432 is the Basolateral sorting signal element; that stretch reads YEDQ. Residues 439-458 form a disordered region; that stretch reads GEHEDKAQRPLRVEEADTYA.

Belongs to the ammonium transporter (TC 2.A.49) family. Rh subfamily. In terms of assembly, interacts (via C-terminus) with ANK2 and ANK3; required for targeting to the basolateral membrane. Post-translationally, N-glycosylated.

The protein localises to the cell membrane. It is found in the basolateral cell membrane. The catalysed reaction is NH4(+)(in) = NH4(+)(out). It carries out the reaction methylamine(out) = methylamine(in). It catalyses the reaction CO2(out) = CO2(in). Ammonium transporter involved in the maintenance of acid-base homeostasis. Transports ammonium and its related derivative methylammonium across the basolateral plasma membrane of epithelial cells likely contributing to renal transepithelial ammonia transport and ammonia metabolism. May transport either NH4(+) or NH3 ammonia species predominantly mediating an electrogenic NH4(+) transport. May act as a CO2 channel providing for renal acid secretion. The sequence is that of Ammonium transporter Rh type B (RHBG) from Gorilla gorilla gorilla (Western lowland gorilla).